A 65-amino-acid chain; its full sequence is Large ribosomal subunit protein bL35 (65 aa).

The segment at 1 to 28 (MPKMKTHRGAAKRFKKTGTGKIKRGQSK) is disordered.

This sequence belongs to the bacterial ribosomal protein bL35 family.

The sequence is that of Large ribosomal subunit protein bL35 from Acidobacterium capsulatum (strain ATCC 51196 / DSM 11244 / BCRC 80197 / JCM 7670 / NBRC 15755 / NCIMB 13165 / 161).